Consider the following 474-residue polypeptide: Catalase (474 aa).

Residues His-52 and Asn-124 contribute to the active site. Tyr-334 is a heme binding site.

It belongs to the catalase family. Heme serves as cofactor.

The enzyme catalyses 2 H2O2 = O2 + 2 H2O. Decomposes hydrogen peroxide into water and oxygen; serves to protect cells from the toxic effects of hydrogen peroxide. This chain is Catalase (katA), found in Campylobacter jejuni subsp. jejuni serotype O:2 (strain ATCC 700819 / NCTC 11168).